A 297-amino-acid chain; its full sequence is Homoserine kinase (297 aa).

An ATP-binding site is contributed by 84–94 (PPARGLGSSAT).

It belongs to the GHMP kinase family. Homoserine kinase subfamily.

Its subcellular location is the cytoplasm. It catalyses the reaction L-homoserine + ATP = O-phospho-L-homoserine + ADP + H(+). It participates in amino-acid biosynthesis; L-threonine biosynthesis; L-threonine from L-aspartate: step 4/5. Catalyzes the ATP-dependent phosphorylation of L-homoserine to L-homoserine phosphate. In Aquifex aeolicus (strain VF5), this protein is Homoserine kinase (thrB).